A 153-amino-acid chain; its full sequence is ORM1-like protein 3 (153 aa).

At 1–21 (MNVGTAHSEVNPNTRVMNSRG) the chain is on the cytoplasmic side. 2 helical membrane passes run 22–42 (IWLSYVLGIGLLHIILLSIPF) and 43–63 (VSVPVVWTLTNLIHNMCMYIF). The Cytoplasmic segment spans residues 64–94 (LHTVKGTPFETPDQGKARLLTHWEQMDYGVQ). Residues 95–117 (FTASRKFLTITPIILYFLTSFYT) traverse the membrane as a helical segment. Residues 118-121 (KYDR) lie on the Extracellular side of the membrane. The helical transmembrane segment at 122–142 (VHFVINTISLLTVLIPKLPQF) threads the bilayer. Pro137 is modified (hydroxyproline). Over 143-153 (HGVRLFGINKY) the chain is Cytoplasmic.

The protein belongs to the ORM family. As to quaternary structure, ceramide-sensitive subunit of the serine palmitoyltransferase (SPT) complex, which is also composed of SPTLC1, SPTLC2/3 and SPTSSA/B. When hydroxylated at Pro-137, ubiquitinated via 'Lys-48'-linkage, leading to proteasomal degradation. In endothelial cells, ORMDL3 proteasomal degradation is controlled by the sphingosine 1-phosphate receptor signaling pathway.

It is found in the endoplasmic reticulum membrane. Plays an essential role in the homeostatic regulation of sphingolipid de novo biosynthesis by modulating the activity of the serine palmitoyltransferase (SPT) in response to ceramide levels. When complexed to SPT, the binding of ceramides to its N-terminus stabilizes a conformation that block SPT substrate entry, hence preventing SPT catalytic activity. Through this mechanism, maintains ceramide levels at sufficient concentrations for the production of complex sphingolipids, but which prevents the accumulation of ceramides to levels that trigger apoptosis. In Danio rerio (Zebrafish), this protein is ORM1-like protein 3 (ormdl3).